The sequence spans 293 residues: D-psicose 3-epimerase (293 aa).

Residues Y6 and A107 each contribute to the substrate site. The active-site Proton donor/acceptor is the E150. E150 lines the Mn(2+) pocket. Substrate contacts are provided by residues E156 and D183–H186. Residues D183 and H209 each contribute to the Mn(2+) site. Residue R215 participates in substrate binding. The active-site Proton donor/acceptor is the E244. E244 lines the Mn(2+) pocket.

The protein belongs to the hyi family. In terms of assembly, homotetramer. Mn(2+) serves as cofactor. Requires Co(2+) as cofactor.

The catalysed reaction is D-allulose = keto-D-fructose. Functionally, involved in the biosynthesis of D-psicose. Catalyzes the reversible epimerization of D-fructose at the C3 position to yield D-psicose. The enzyme is highly specific for D-psicose and shows very low activity with D-tagatose. This chain is D-psicose 3-epimerase, found in Ruminiclostridium cellulolyticum (strain ATCC 35319 / DSM 5812 / JCM 6584 / H10) (Clostridium cellulolyticum).